A 445-amino-acid chain; its full sequence is Methionine aminopeptidase 2-2 (445 aa).

Residues 1 to 92 (MAAQASEDLK…RVPISQLFPN (92 aa)) form a disordered region. Residues 18–33 (AGDSKAAAATAGQAEA) show a composition bias toward low complexity. A compositionally biased stretch (acidic residues) spans 34 to 46 (GEAEDDSDDDEVD). Residues 47 to 58 (GNAAPEGAASGA) are compositionally biased toward low complexity. Positions 59–74 (AKKKKKRKPKKKKKGG) are enriched in basic residues. Histidine 198 contacts substrate. Positions 218, 229, and 298 each coordinate a divalent metal cation. Position 306 (histidine 306) interacts with substrate. Residues glutamate 331 and glutamate 426 each coordinate a divalent metal cation.

Belongs to the peptidase M24A family. Methionine aminopeptidase eukaryotic type 2 subfamily. Requires Co(2+) as cofactor. It depends on Zn(2+) as a cofactor. Mn(2+) is required as a cofactor. Fe(2+) serves as cofactor.

Its subcellular location is the cytoplasm. The enzyme catalyses Release of N-terminal amino acids, preferentially methionine, from peptides and arylamides.. Its function is as follows. Cotranslationally removes the N-terminal methionine from nascent proteins. The N-terminal methionine is often cleaved when the second residue in the primary sequence is small and uncharged (Met-Ala-, Cys, Gly, Pro, Ser, Thr, or Val). The polypeptide is Methionine aminopeptidase 2-2 (Aspergillus terreus (strain NIH 2624 / FGSC A1156)).